A 286-amino-acid polypeptide reads, in one-letter code: Pantothenate synthetase (286 aa).

30 to 37 lines the ATP pocket; it reads MGNLHAGH. The active-site Proton donor is His37. Gln61 is a (R)-pantoate binding site. Residue Gln61 coordinates beta-alanine. 149-152 is a binding site for ATP; that stretch reads GQKD. Gln155 is a (R)-pantoate binding site. ATP contacts are provided by residues Val178 and 186-189; that span reads LSSR.

Belongs to the pantothenate synthetase family. As to quaternary structure, homodimer.

The protein resides in the cytoplasm. It carries out the reaction (R)-pantoate + beta-alanine + ATP = (R)-pantothenate + AMP + diphosphate + H(+). It functions in the pathway cofactor biosynthesis; (R)-pantothenate biosynthesis; (R)-pantothenate from (R)-pantoate and beta-alanine: step 1/1. In terms of biological role, catalyzes the condensation of pantoate with beta-alanine in an ATP-dependent reaction via a pantoyl-adenylate intermediate. In Stutzerimonas stutzeri (strain A1501) (Pseudomonas stutzeri), this protein is Pantothenate synthetase.